We begin with the raw amino-acid sequence, 654 residues long: Peptide-N(4)-(N-acetyl-beta-glucosaminyl)asparagine amidase (654 aa).

Residue Ala2 is modified to N-acetylalanine. The 62-residue stretch at 30 to 91 folds into the PUB domain; that stretch reads EASKLLLTYA…EGETHLIFPK (62 aa). The segment covering 112-123 has biased composition (basic and acidic residues); sequence RLDGSNKSHKVE. Residues 112 to 167 form a disordered region; sequence RLDGSNKSHKVESSQQPAASTQLPTTPSSNPSGLNQHTRNRQGQSPDPPSASTVTP. Polar residues predominate over residues 124-167; that stretch reads SSQQPAASTQLPTTPSSNPSGLNQHTRNRQGQSPDPPSASTVTP. Thr137 bears the Phosphothreonine mark. Zn(2+) contacts are provided by Cys250, Cys253, Cys283, and Cys286. Cys309 serves as the catalytic Nucleophile. Catalysis depends on residues His336 and Asp353. The PAW domain occupies 454 to 654; it reads ELGGRISGSV…LEIIIKFSDL (201 aa).

This sequence belongs to the transglutaminase-like superfamily. PNGase family. Component of a complex required to couple retrotranslocation, ubiquitination and deglycosylation composed of NGLY1, SAKS1, AMFR, VCP and RAD23B. Interacts with the proteasome components RAD23B and PSMC1. Interacts with directly with VCP. Interacts with DERL1, bringing it close to the endoplasmic reticulum membrane. Interacts with SAKS1. The cofactor is Zn(2+).

Its subcellular location is the cytoplasm. It carries out the reaction Hydrolysis of an N(4)-(acetyl-beta-D-glucosaminyl)asparagine residue in which the glucosamine residue may be further glycosylated, to yield a (substituted) N-acetyl-beta-D-glucosaminylamine and a peptide containing an aspartate residue.. With respect to regulation, inhibited by Z-VAD-fmk, a well-known caspase inhibitor, which inhibits enzyme activity through covalent binding of the carbohydrate to the single Cys-306 residue. Functionally, specifically deglycosylates the denatured form of N-linked glycoproteins in the cytoplasm and assists their proteasome-mediated degradation. Cleaves the beta-aspartyl-glucosamine (GlcNAc) of the glycan and the amide side chain of Asn, converting Asn to Asp. Prefers proteins containing high-mannose over those bearing complex type oligosaccharides. Can recognize misfolded proteins in the endoplasmic reticulum that are exported to the cytosol to be destroyed and deglycosylate them, while it has no activity toward native proteins. Deglycosylation is a prerequisite for subsequent proteasome-mediated degradation of some, but not all, misfolded glycoproteins. The polypeptide is Peptide-N(4)-(N-acetyl-beta-glucosaminyl)asparagine amidase (NGLY1) (Macaca fascicularis (Crab-eating macaque)).